A 414-amino-acid polypeptide reads, in one-letter code: Glutamyl-tRNA reductase (414 aa).

Residues 49-52 (TCNR), Ser-108, 113-115 (EPQ), and Gln-119 contribute to the substrate site. Residue Cys-50 is the Nucleophile of the active site. NADP(+) is bound at residue 188–193 (GAGQTG).

It belongs to the glutamyl-tRNA reductase family. As to quaternary structure, homodimer.

The catalysed reaction is (S)-4-amino-5-oxopentanoate + tRNA(Glu) + NADP(+) = L-glutamyl-tRNA(Glu) + NADPH + H(+). It functions in the pathway porphyrin-containing compound metabolism; protoporphyrin-IX biosynthesis; 5-aminolevulinate from L-glutamyl-tRNA(Glu): step 1/2. Catalyzes the NADPH-dependent reduction of glutamyl-tRNA(Glu) to glutamate 1-semialdehyde (GSA). The protein is Glutamyl-tRNA reductase of Francisella tularensis subsp. novicida (strain U112).